A 189-amino-acid chain; its full sequence is Movement protein p22 (189 aa).

The protein belongs to the tombusvirus/aureusvirus movement protein p22 family. As to quaternary structure, interacts with host protein HFI22. Phosphorylated.

Its subcellular location is the host membrane. Cell-to-cell movement. Displays RNA-binding activity. The polypeptide is Movement protein p22 (Capsicum annuum (Capsicum pepper)).